We begin with the raw amino-acid sequence, 88 residues long: MGGASIWHWIVVGVIVMLLFGRGKVSELMGDVAKGIKAFKKGMADEDQPQAPVVAAPPVTATEPVRTLPPHPTEPAPATHATVDRKVV.

The chain crosses the membrane as a helical span at residues 1–21 (MGGASIWHWIVVGVIVMLLFG). The tract at residues 62–88 (TEPVRTLPPHPTEPAPATHATVDRKVV) is disordered.

It belongs to the TatA/E family. The Tat system comprises two distinct complexes: a TatABC complex, containing multiple copies of TatA, TatB and TatC subunits, and a separate TatA complex, containing only TatA subunits. Substrates initially bind to the TatABC complex, which probably triggers association of the separate TatA complex to form the active translocon.

Its subcellular location is the cell inner membrane. In terms of biological role, part of the twin-arginine translocation (Tat) system that transports large folded proteins containing a characteristic twin-arginine motif in their signal peptide across membranes. TatA could form the protein-conducting channel of the Tat system. This Methylobacterium sp. (strain 4-46) protein is Sec-independent protein translocase protein TatA.